Here is a 1674-residue protein sequence, read N- to C-terminus: E3 ubiquitin-protein ligase SHPRH (1674 aa).

Residues 1–26 (MSSRRKRAPPMKVDEERQQQLHWNMH) are disordered. A compositionally biased stretch (basic and acidic residues) spans 12–26 (KVDEERQQQLHWNMH). 2 positions are modified to phosphoserine: S259 and S261. Residues 302–384 (YQREAVNWML…TVEVLALILT (83 aa)) enclose the Helicase ATP-binding; first part domain. 368-375 (DEMGLGKT) contributes to the ATP binding site. An H15 domain is found at 433–507 (HCPPTRVMIL…GFSGTFTLGK (75 aa)). Residues 524-548 (SPRKIEKELRKSVNKDADSEYLPSN) form a disordered region. A compositionally biased stretch (basic and acidic residues) spans 526–541 (RKIEKELRKSVNKDAD). S626 carries the phosphoserine modification. A PHD-type zinc finger spans residues 649-700 (RFECICGEFDQIGHKPRVQCLKCHLWQHAKCVNYEEKNLKVKPFYCPHCLVA). The 159-residue stretch at 701–859 (MEPVSTRATL…FGLVVFLGIE (159 aa)) folds into the Helicase ATP-binding; second part domain. The DEAQ box motif lies at 810–813 (DEAQ). The RING-type zinc-finger motif lies at 1423–1470 (CPICARQLGKQWAVLTCGHCFCNECTSIIIEQYSVGSHRSSIKCAICR). The Helicase C-terminal domain occupies 1505-1663 (AVVRTLMKIQ…ASVLTVAGLA (159 aa)).

This sequence belongs to the SNF2/RAD54 helicase family. Homodimer. Interacts with HLTF, PCNA, UBE2N and RAD18. In terms of tissue distribution, broadly expressed (at protein level).

The enzyme catalyses S-ubiquitinyl-[E2 ubiquitin-conjugating enzyme]-L-cysteine + [acceptor protein]-L-lysine = [E2 ubiquitin-conjugating enzyme]-L-cysteine + N(6)-ubiquitinyl-[acceptor protein]-L-lysine.. It functions in the pathway protein modification; protein ubiquitination. Functionally, E3 ubiquitin-protein ligase involved in DNA repair. Upon genotoxic stress, accepts ubiquitin from the UBE2N-UBE2V2 E2 complex and transfers it to 'Lys-164' of PCNA which had been monoubiquitinated by UBE2A/B-RAD18, promoting the formation of non-canonical poly-ubiquitin chains linked through 'Lys-63'. In Mus musculus (Mouse), this protein is E3 ubiquitin-protein ligase SHPRH (Shprh).